We begin with the raw amino-acid sequence, 132 residues long: Glycine cleavage system H protein (132 aa).

The Lipoyl-binding domain occupies 24–106 (TVRVGLTDFA…YGAGWLLDVH (83 aa)). Lys-65 bears the N6-lipoyllysine mark.

This sequence belongs to the GcvH family. As to quaternary structure, the glycine cleavage system is composed of four proteins: P, T, L and H. It depends on (R)-lipoate as a cofactor.

Functionally, the glycine cleavage system catalyzes the degradation of glycine. The H protein shuttles the methylamine group of glycine from the P protein to the T protein. The protein is Glycine cleavage system H protein of Mycobacterium leprae (strain Br4923).